The sequence spans 55 residues: MAKPTTVKIKLVSTADTGFFYVTKKNPRTQTEKLSFRKYDPVVRKHVDFKEAKIK.

It belongs to the bacterial ribosomal protein bL33 family.

This Rhizorhabdus wittichii (strain DSM 6014 / CCUG 31198 / JCM 15750 / NBRC 105917 / EY 4224 / RW1) (Sphingomonas wittichii) protein is Large ribosomal subunit protein bL33.